Consider the following 468-residue polypeptide: Glutamate--tRNA ligase (468 aa).

The 'HIGH' region signature appears at 14–24 (PSPTGFIHLGN). Positions 246 to 250 (KMSKR) match the 'KMSKS' region motif. Lys-249 is a binding site for ATP.

This sequence belongs to the class-I aminoacyl-tRNA synthetase family. Glutamate--tRNA ligase type 1 subfamily. Monomer.

Its subcellular location is the cytoplasm. It catalyses the reaction tRNA(Glu) + L-glutamate + ATP = L-glutamyl-tRNA(Glu) + AMP + diphosphate. Functionally, catalyzes the attachment of glutamate to tRNA(Glu) in a two-step reaction: glutamate is first activated by ATP to form Glu-AMP and then transferred to the acceptor end of tRNA(Glu). In Leptothrix cholodnii (strain ATCC 51168 / LMG 8142 / SP-6) (Leptothrix discophora (strain SP-6)), this protein is Glutamate--tRNA ligase.